Reading from the N-terminus, the 206-residue chain is Ras-related protein RABH1a (206 aa).

GTP is bound at residue 14–21 (GDQGVGKT). The Effector region motif lies at 36–44 (YQATIGIDF). GTP contacts are provided by residues 62–66 (DTAGQ), 120–123 (NKTD), and 150–151 (SA). Residues C204 and C206 are each lipidated (S-geranylgeranyl cysteine). Residue C206 is modified to Cysteine methyl ester.

The protein belongs to the small GTPase superfamily. Rab family.

It is found in the golgi apparatus membrane. Functionally, protein transport. Regulator of membrane traffic from the Golgi apparatus towards the endoplasmic reticulum (ER). This is Ras-related protein RABH1a (RABH1A) from Arabidopsis thaliana (Mouse-ear cress).